The primary structure comprises 129 residues: Histone H2A-III (129 aa).

The interval Met-1–Ala-22 is disordered. Ser-2 carries the N-acetylserine modification. A Phosphoserine modification is found at Ser-2. Position 6 is an N6-(2-hydroxyisobutyryl)lysine (Lys-6). Residues Lys-6 and Lys-10 each carry the N6-acetyllysine modification. The segment covering Gln-7–Ser-19 has biased composition (basic residues). Position 10 is an N6-(2-hydroxyisobutyryl)lysine; alternate (Lys-10). An N6-lactoyllysine; alternate modification is found at Lys-10. At Lys-10 the chain carries N6-succinyllysine. Residues Lys-14 and Lys-16 each participate in a glycyl lysine isopeptide (Lys-Gly) (interchain with G-Cter in ubiquitin) cross-link. Lys-37 is modified (N6-(2-hydroxyisobutyryl)lysine; alternate). N6-(2-hydroxyisobutyryl)lysine is present on residues Lys-75 and Lys-76. The residue at position 96 (Lys-96) is an N6-(2-hydroxyisobutyryl)lysine; alternate. At Lys-96 the chain carries N6-succinyllysine. Lys-96 is subject to N6-glutaryllysine; alternate. N6-glutaryllysine is present on Lys-100. Gln-105 carries the post-translational modification N5-methylglutamine. The residue at position 119 (Lys-119) is an N6-(2-hydroxyisobutyryl)lysine; alternate. An N6-glutaryllysine; alternate mark is found at Lys-119 and Lys-120. Lys-120 is covalently cross-linked (Glycyl lysine isopeptide (Lys-Gly) (interchain with G-Cter in ubiquitin)).

It belongs to the histone H2A family. The nucleosome is a histone octamer containing two molecules each of H2A, H2B, H3 and H4 assembled in one H3-H4 heterotetramer and two H2A-H2B heterodimers. The octamer wraps approximately 147 bp of DNA. In terms of processing, monoubiquitination of Lys-120 (H2AK119Ub) gives a specific tag for epigenetic transcriptional repression. Following DNA double-strand breaks (DSBs), it is ubiquitinated through 'Lys-63' linkage of ubiquitin moieties, leading to the recruitment of repair proteins to sites of DNA damage. H2AK119Ub and ionizing radiation-induced 'Lys-63'-linked ubiquitination are distinct events. Phosphorylation on Ser-2 is enhanced during mitosis. Phosphorylation on Ser-2 directly represses transcription. Post-translationally, glutamine methylation at Gln-105 (H2AQ104me) by FBL is specifically dedicated to polymerase I. It is present at 35S ribosomal DNA locus and impairs binding of the FACT complex.

It localises to the nucleus. Its subcellular location is the chromosome. Its function is as follows. Core component of nucleosome. Nucleosomes wrap and compact DNA into chromatin, limiting DNA accessibility to the cellular machineries which require DNA as a template. Histones thereby play a central role in transcription regulation, DNA repair, DNA replication and chromosomal stability. DNA accessibility is regulated via a complex set of post-translational modifications of histones, also called histone code, and nucleosome remodeling. The chain is Histone H2A-III from Gallus gallus (Chicken).